The sequence spans 428 residues: Involucrin (428 aa).

2 disordered regions span residues 1 to 128 (MSQQ…EEKK) and 140 to 398 (KRDD…GQAQ). Positions 56–76 (PSKHEEKHVTIVKGVPEHECE) are enriched in basic and acidic residues. A compositionally biased stretch (low complexity) spans 77–92 (QQQQAQGQERQQQHWG). Composition is skewed to basic and acidic residues over residues 107-117 (LKQEEAQREKQ), 162-174 (QLKH…KPLE), and 192-208 (QLKH…HLEQ). Positions 209–218 (QEGQLELPEQ) are enriched in low complexity. Residues 220–297 (DQPKHLEQLE…CEGQLEHLEQ (78 aa)) are compositionally biased toward basic and acidic residues. Positions 298 to 311 (QEGQLELPEQQVGQ) are enriched in low complexity. Composition is skewed to basic and acidic residues over residues 313–327 (KHLE…HPEQ), 352–366 (KHLE…HPEQ), and 374–385 (QLKDLEQQERQL).

It belongs to the involucrin family. Directly or indirectly cross-linked to cornifelin (CNFN). Substrate of transglutaminase. Specific glutamines or lysines are cross-linked to keratins, desmoplakin and to inter involucrin molecules. As to expression, keratinocytes of epidermis and other stratified squamous epithelia.

Its subcellular location is the cytoplasm. Part of the insoluble cornified cell envelope (CE) of stratified squamous epithelia. In Cebus albifrons (White-fronted capuchin), this protein is Involucrin (IVL).